Consider the following 165-residue polypeptide: uncharacterized protein (165 aa).

Belongs to the IIV-6 196R family.

This is an uncharacterized protein from Invertebrate iridescent virus 3 (IIV-3).